Consider the following 164-residue polypeptide: Ribosomal RNA large subunit methyltransferase H (164 aa).

Glycine 109 is an S-adenosyl-L-methionine binding site.

This sequence belongs to the RNA methyltransferase RlmH family. As to quaternary structure, homodimer.

The protein resides in the cytoplasm. The catalysed reaction is pseudouridine(1915) in 23S rRNA + S-adenosyl-L-methionine = N(3)-methylpseudouridine(1915) in 23S rRNA + S-adenosyl-L-homocysteine + H(+). Functionally, specifically methylates the pseudouridine at position 1915 (m3Psi1915) in 23S rRNA. This is Ribosomal RNA large subunit methyltransferase H from Methylobacterium radiotolerans (strain ATCC 27329 / DSM 1819 / JCM 2831 / NBRC 15690 / NCIMB 10815 / 0-1).